Here is a 335-residue protein sequence, read N- to C-terminus: Methionine import ATP-binding protein MetN 1 (335 aa).

The ABC transporter domain occupies 2–242; that stretch reads IEFQQVHKTY…PQHPTTKRFV (241 aa). 38–45 is an ATP binding site; sequence GHSGAGKS.

Belongs to the ABC transporter superfamily. Methionine importer (TC 3.A.1.24) family. The complex is composed of two ATP-binding proteins (MetN), two transmembrane proteins (MetI) and a solute-binding protein (MetQ).

The protein resides in the cell inner membrane. It carries out the reaction L-methionine(out) + ATP + H2O = L-methionine(in) + ADP + phosphate + H(+). The catalysed reaction is D-methionine(out) + ATP + H2O = D-methionine(in) + ADP + phosphate + H(+). In terms of biological role, part of the ABC transporter complex MetNIQ involved in methionine import. Responsible for energy coupling to the transport system. This chain is Methionine import ATP-binding protein MetN 1, found in Pseudomonas putida (strain ATCC 47054 / DSM 6125 / CFBP 8728 / NCIMB 11950 / KT2440).